Here is a 1073-residue protein sequence, read N- to C-terminus: Carbamoyl phosphate synthase large chain (1073 aa).

Positions Pro-2–Glu-403 are carboxyphosphate synthetic domain. ATP contacts are provided by Arg-129, Arg-169, Gly-175, Gly-176, Glu-208, Leu-210, Glu-215, Gly-241, Ile-242, His-243, Gln-285, and Glu-299. An ATP-grasp 1 domain is found at Asp-133–Val-328. The Mg(2+) site is built by Gln-285, Glu-299, and Asn-301. Mn(2+)-binding residues include Gln-285, Glu-299, and Asn-301. The interval Val-404 to Ala-553 is oligomerization domain. The tract at residues Asn-554 to Asn-936 is carbamoyl phosphate synthetic domain. The ATP-grasp 2 domain maps to Gln-679–Ala-870. Residues Arg-715, His-754, Leu-756, Glu-761, Gly-786, Val-787, His-788, Ser-789, Gln-829, and Glu-841 each contribute to the ATP site. The Mg(2+) site is built by Gln-829, Glu-841, and Asn-843. Positions 829, 841, and 843 each coordinate Mn(2+). In terms of domain architecture, MGS-like spans Ser-937–Lys-1073. Positions Ser-937–Lys-1073 are allosteric domain.

Belongs to the CarB family. As to quaternary structure, composed of two chains; the small (or glutamine) chain promotes the hydrolysis of glutamine to ammonia, which is used by the large (or ammonia) chain to synthesize carbamoyl phosphate. Tetramer of heterodimers (alpha,beta)4. Requires Mg(2+) as cofactor. Mn(2+) serves as cofactor.

It carries out the reaction hydrogencarbonate + L-glutamine + 2 ATP + H2O = carbamoyl phosphate + L-glutamate + 2 ADP + phosphate + 2 H(+). It catalyses the reaction hydrogencarbonate + NH4(+) + 2 ATP = carbamoyl phosphate + 2 ADP + phosphate + 2 H(+). The protein operates within amino-acid biosynthesis; L-arginine biosynthesis; carbamoyl phosphate from bicarbonate: step 1/1. It functions in the pathway pyrimidine metabolism; UMP biosynthesis via de novo pathway; (S)-dihydroorotate from bicarbonate: step 1/3. In terms of biological role, large subunit of the glutamine-dependent carbamoyl phosphate synthetase (CPSase). CPSase catalyzes the formation of carbamoyl phosphate from the ammonia moiety of glutamine, carbonate, and phosphate donated by ATP, constituting the first step of 2 biosynthetic pathways, one leading to arginine and/or urea and the other to pyrimidine nucleotides. The large subunit (synthetase) binds the substrates ammonia (free or transferred from glutamine from the small subunit), hydrogencarbonate and ATP and carries out an ATP-coupled ligase reaction, activating hydrogencarbonate by forming carboxy phosphate which reacts with ammonia to form carbamoyl phosphate. The protein is Carbamoyl phosphate synthase large chain of Escherichia coli O157:H7.